The following is an 89-amino-acid chain: Small ribosomal subunit protein uS14 (89 aa).

This sequence belongs to the universal ribosomal protein uS14 family. In terms of assembly, part of the 30S ribosomal subunit. Contacts proteins S3 and S10.

Functionally, binds 16S rRNA, required for the assembly of 30S particles and may also be responsible for determining the conformation of the 16S rRNA at the A site. The sequence is that of Small ribosomal subunit protein uS14 from Chlorobaculum parvum (strain DSM 263 / NCIMB 8327) (Chlorobium vibrioforme subsp. thiosulfatophilum).